A 595-amino-acid chain; its full sequence is Methionine--tRNA ligase (595 aa).

The 'HIGH' region signature appears at 11-21 (PYANGPRHIGH). Zn(2+) is bound by residues C143, C146, C156, and C159. The 'KMSKS' region signature appears at 350-354 (KFSSS). S353 is a binding site for ATP.

It belongs to the class-I aminoacyl-tRNA synthetase family. MetG type 1 subfamily. As to quaternary structure, monomer. Zn(2+) is required as a cofactor.

It localises to the cytoplasm. The enzyme catalyses tRNA(Met) + L-methionine + ATP = L-methionyl-tRNA(Met) + AMP + diphosphate. Is required not only for elongation of protein synthesis but also for the initiation of all mRNA translation through initiator tRNA(fMet) aminoacylation. The sequence is that of Methionine--tRNA ligase from Nocardioides sp. (strain ATCC BAA-499 / JS614).